Reading from the N-terminus, the 301-residue chain is Immune-associated nucleotide-binding protein 5 (301 aa).

Residues 11 to 214 (EPVRNIVLVG…FTEENDLNEK (204 aa)) form the AIG1-type G domain. The segment at 20–27 (GPTGNGKS) is G1. 20 to 28 (GPTGNGKSS) provides a ligand contact to GTP. The G2 stretch occupies residues 46–50 (CKTCK). A G3 region spans residues 63–66 (DTPG). The segment at 133–136 (TGGD) is G4. The G5 stretch occupies residues 172–174 (NNK). Position 173 (Asn173) interacts with GTP.

It belongs to the TRAFAC class TrmE-Era-EngA-EngB-Septin-like GTPase superfamily. AIG1/Toc34/Toc159-like paraseptin GTPase family. IAN subfamily. Expressed in pollen, cotyledons and lateral roots.

The chain is Immune-associated nucleotide-binding protein 5 from Arabidopsis thaliana (Mouse-ear cress).